The following is a 432-amino-acid chain: Homogentisate 1,2-dioxygenase (432 aa).

The active-site Proton acceptor is His287. Residues His330 and Glu336 each coordinate Fe cation. 2 residues coordinate homogentisate: Tyr345 and His366. His366 contacts Fe cation.

The protein belongs to the homogentisate dioxygenase family. As to quaternary structure, hexamer; dimer of trimers. Fe cation is required as a cofactor.

The enzyme catalyses homogentisate + O2 = 4-maleylacetoacetate + H(+). It functions in the pathway amino-acid degradation; L-phenylalanine degradation; acetoacetate and fumarate from L-phenylalanine: step 4/6. In terms of biological role, involved in the catabolism of homogentisate (2,5-dihydroxyphenylacetate or 2,5-OH-PhAc), a central intermediate in the degradation of phenylalanine and tyrosine. Catalyzes the oxidative ring cleavage of the aromatic ring of homogentisate to yield maleylacetoacetate. In Pseudomonas aeruginosa (strain UCBPP-PA14), this protein is Homogentisate 1,2-dioxygenase.